The chain runs to 255 residues: NAD-dependent protein deacylase (255 aa).

The Deacetylase sirtuin-type domain maps to 1–253; the sequence is MEFSDELLAS…PLLLQALRRS (253 aa). Residue 22–42 coordinates NAD(+); it reads GAGVSAESGIPTFRDALTGFW. Tyrosine 67 and arginine 70 together coordinate substrate. 101-104 provides a ligand contact to NAD(+); sequence QNVD. The active-site Proton acceptor is the histidine 119. Residues cysteine 127, cysteine 130, cysteine 155, and cysteine 158 each coordinate Zn(2+). Residues 195 to 197, 221 to 223, and alanine 239 contribute to the NAD(+) site; these read GTS and NPA.

It belongs to the sirtuin family. Class III subfamily. The cofactor is Zn(2+).

The protein localises to the cytoplasm. The catalysed reaction is N(6)-acetyl-L-lysyl-[protein] + NAD(+) + H2O = 2''-O-acetyl-ADP-D-ribose + nicotinamide + L-lysyl-[protein]. It catalyses the reaction N(6)-succinyl-L-lysyl-[protein] + NAD(+) + H2O = 2''-O-succinyl-ADP-D-ribose + nicotinamide + L-lysyl-[protein]. Functionally, NAD-dependent lysine deacetylase and desuccinylase that specifically removes acetyl and succinyl groups on target proteins. Modulates the activities of several proteins which are inactive in their acylated form. The chain is NAD-dependent protein deacylase from Methylococcus capsulatus (strain ATCC 33009 / NCIMB 11132 / Bath).